A 503-amino-acid chain; its full sequence is Depupylase (503 aa).

Mg(2+) contacts are provided by Glu8 and Tyr92. Asp94 serves as the catalytic Proton acceptor. Glu99 contributes to the Mg(2+) binding site. Residue 101–102 participates in ATP binding; sequence ST. Mg(2+) is bound at residue His155. Positions 157 and 239 each coordinate ATP. Position 241 (His241) interacts with Mg(2+).

The protein belongs to the Pup ligase/Pup deamidase family. Pup deamidase subfamily. As to quaternary structure, likely interacts with the C-terminal half of the prokaryotic ubiquitin-like protein Pup. It depends on ATP as a cofactor.

Its pathway is protein degradation; proteasomal Pup-dependent pathway. In terms of biological role, displays depupylase (DPUP) activity, removing conjugated Pup from target proteins; is thus involved in the recycling of Pup and may function similarly to deubiquitinases (DUBs) in eukaryotes to prevent or promote proteasomal degradation of certain proteins. Is also able to catalyze the deamidation of the C-terminal glutamine to glutamate in a variant of the prokaryotic ubiquitin-like protein Pup; however, since Pup from A.cellulolyticus possesses a C-terminal glutamate, this deamidase activity may be of no significance in vivo. This chain is Depupylase (dop), found in Acidothermus cellulolyticus (strain ATCC 43068 / DSM 8971 / 11B).